The chain runs to 180 residues: Ribosome maturation factor RimM (180 aa).

One can recognise a PRC barrel domain in the interval 104-177 (PEEFHDHQLV…RVVVDPPGGL (74 aa)).

It belongs to the RimM family. Binds ribosomal protein uS19.

It is found in the cytoplasm. In terms of biological role, an accessory protein needed during the final step in the assembly of 30S ribosomal subunit, possibly for assembly of the head region. Essential for efficient processing of 16S rRNA. May be needed both before and after RbfA during the maturation of 16S rRNA. It has affinity for free ribosomal 30S subunits but not for 70S ribosomes. The chain is Ribosome maturation factor RimM from Salinispora arenicola (strain CNS-205).